A 302-amino-acid chain; its full sequence is Ornithine carbamoyltransferase (302 aa).

Carbamoyl phosphate contacts are provided by residues 52 to 55 (STRT), Gln-79, Arg-103, and 130 to 133 (HPCQ). Residues Asn-161, Asp-221, and 225–226 (SM) contribute to the L-ornithine site. Residues 261–262 (CL) and Arg-289 each bind carbamoyl phosphate.

This sequence belongs to the aspartate/ornithine carbamoyltransferase superfamily. OTCase family.

It is found in the cytoplasm. It catalyses the reaction carbamoyl phosphate + L-ornithine = L-citrulline + phosphate + H(+). It participates in amino-acid biosynthesis; L-arginine biosynthesis; L-arginine from L-ornithine and carbamoyl phosphate: step 1/3. In terms of biological role, reversibly catalyzes the transfer of the carbamoyl group from carbamoyl phosphate (CP) to the N(epsilon) atom of ornithine (ORN) to produce L-citrulline. The protein is Ornithine carbamoyltransferase of Syntrophotalea carbinolica (strain DSM 2380 / NBRC 103641 / GraBd1) (Pelobacter carbinolicus).